The primary structure comprises 221 residues: Ribosomal RNA small subunit methyltransferase G (221 aa).

The S-adenosyl-L-methionine site is built by glycine 78, phenylalanine 83, and arginine 150.

It belongs to the methyltransferase superfamily. RNA methyltransferase RsmG family.

The protein resides in the cytoplasm. Specifically methylates the N7 position of a guanine in 16S rRNA. The chain is Ribosomal RNA small subunit methyltransferase G from Bifidobacterium longum (strain DJO10A).